A 479-amino-acid chain; its full sequence is Ribosomal RNA small subunit methyltransferase F (479 aa).

S-adenosyl-L-methionine-binding positions include 125-131, glutamate 149, aspartate 176, and aspartate 194; that span reads AAAPGSK. The Nucleophile role is filled by cysteine 247.

It belongs to the class I-like SAM-binding methyltransferase superfamily. RsmB/NOP family.

It is found in the cytoplasm. It catalyses the reaction cytidine(1407) in 16S rRNA + S-adenosyl-L-methionine = 5-methylcytidine(1407) in 16S rRNA + S-adenosyl-L-homocysteine + H(+). Functionally, specifically methylates the cytosine at position 1407 (m5C1407) of 16S rRNA. This is Ribosomal RNA small subunit methyltransferase F from Shigella boydii serotype 18 (strain CDC 3083-94 / BS512).